A 285-amino-acid chain; its full sequence is Para-Rep C6 (285 aa).

Residues 3-99 form the CRESS-DNA virus Rep endonuclease domain; that stretch reads TRQSTSWVFT…VAGPWEYGLF (97 aa). The short motif at 10–13 is the RCR-1 element; sequence VFTL. Positions 36 and 42 each coordinate a divalent metal cation. The RCR-2 signature appears at 42 to 44; that stretch reads HLQ. Residues 52–74 carry the Nuclear localization signal motif; the sequence is RNTTLRQAKYIFNGLNPHLEIAR. Y82 functions as the For DNA cleavage activity in the catalytic mechanism. An RCR-3 motif is present at residues 82–85; that stretch reads YAMK. D87 serves as a coordination point for a divalent metal cation. Residues 99-105 carry the Nuclear localization signal motif; it reads FIKRGSH. 175–183 contributes to the ATP binding site; the sequence is GPAGNEGKS.

This sequence belongs to the nanoviridea/circoviridae replication-associated protein family. Homooligomer (Potential). Rep binds to repeated DNA motifs (iterons). It depends on Mg(2+) as a cofactor. Requires Mn(2+) as cofactor.

The protein localises to the host nucleus. The catalysed reaction is ATP + H2O = ADP + phosphate + H(+). Functionally, initiates and terminates the replication only of its own subviral DNA molecule. The closed circular ssDNA genome is first converted to a superhelical dsDNA. Rep binds a specific hairpin at the genome origin of replication. Introduces an endonucleolytic nick within the intergenic region of the genome, thereby initiating the rolling circle replication (RCR). Following cleavage, binds covalently to the 5'-phosphate of DNA as a tyrosyl ester. The cleavage gives rise to a free 3'-OH that serves as a primer for the cellular DNA polymerase. The polymerase synthesizes the (+) strand DNA by rolling circle mechanism. After one round of replication, a Rep-catalyzed nucleotidyl transfer reaction releases a circular single-stranded virus genome, thereby terminating the replication. Displays origin-specific DNA cleavage, nucleotidyl transferase, ATPase and helicase activities. This is Para-Rep C6 (C6) from Subterranean clover stunt C6 alphasatellite (SCSC6A).